The sequence spans 173 residues: MVFNVYYNGYYVEKKFSKEFLIHIAPDLKNSVDWNGSTRKQLRVLDKRAYRQVLHCNGRYYWPDGTKFVSHPYNKSIRTHSATVKRTDSSHRLKSHVVDKRPRRSLDSPRLDGYVLASSPIPHSDWNEELKLYAQSHGYDDYDDNLEDGEIDERDSLKSLNNHLDDLNVLEKQ.

The tract at residues 80–107 is disordered; that stretch reads HSATVKRTDSSHRLKSHVVDKRPRRSLD. The segment covering 85–107 has biased composition (basic and acidic residues); the sequence is KRTDSSHRLKSHVVDKRPRRSLD.

This is an uncharacterized protein from Autographa californica nuclear polyhedrosis virus (AcMNPV).